A 172-amino-acid polypeptide reads, in one-letter code: Co-chaperone protein HscB homolog (172 aa).

Residues 2 to 69 form the J domain; it reads NHFELFNLPV…DSRAAYLLAL (68 aa).

Belongs to the HscB family. In terms of assembly, interacts with HscA and stimulates its ATPase activity.

Co-chaperone involved in the maturation of iron-sulfur cluster-containing proteins. Seems to help targeting proteins to be folded toward HscA. This is Co-chaperone protein HscB homolog from Acinetobacter baumannii (strain SDF).